The sequence spans 321 residues: Beta-porphyranase B (321 aa).

A signal peptide spans 1–20 (MRKTVLYLSAASLFLSSYTL). Residues 31-319 (EHIKNLPEAP…WVRAYKLVPI (289 aa)) form the GH16 domain. Substrate contacts are provided by tryptophan 72, arginine 76, glutamate 173, glutamate 178, and glutamate 284. Residue glutamate 173 is the Nucleophile of the active site. The active-site Proton donor is the glutamate 178.

It belongs to the glycosyl hydrolase 16 family.

It catalyses the reaction Hydrolysis of beta-D-galactopyranose-(1-&gt;4)-alpha-L-galactopyranose-6-sulfate linkages in porphyran.. Cleaves the sulfated polysaccharide porphyran at the (1-&gt;4) linkages between beta-D-galactopyranose and alpha-L-galactopyranose-6-sulfate, forming mostly the disaccharide alpha-L-galactopyranose-6-sulfate-(1-&gt;3)-beta-D-galactose. Some longer oligosaccharides of even number of residues are also observed. Inactive on the non-sulfated agarose portion of the porphyran backbone. In Phocaeicola plebeius (strain DSM 17135 / JCM 12973 / CCUG 54634 / M2) (Bacteroides plebeius), this protein is Beta-porphyranase B.